The primary structure comprises 248 residues: Adenosylcobinamide-GDP ribazoletransferase (248 aa).

7 consecutive transmembrane segments (helical) span residues 24 to 44 (EINLKKGSALLPFVGVIIGAW), 70 to 90 (IIITGGFHVDALADTADGLFS), 106 to 126 (VGANGVIAICFYFLFYGSLFL), 134 to 154 (IGWLFFVLPIVAKGVTMLLFA), 168 to 188 (IFLGVPWWPVVIAQVIVLVAL), 189 to 209 (GAFFSYIGVIAYAGVILFTII), and 228 to 248 (AGGQMGQLICLFCLVLLWGLI).

It belongs to the CobS family. Mg(2+) serves as cofactor.

The protein localises to the cell membrane. It carries out the reaction alpha-ribazole + adenosylcob(III)inamide-GDP = adenosylcob(III)alamin + GMP + H(+). The enzyme catalyses alpha-ribazole 5'-phosphate + adenosylcob(III)inamide-GDP = adenosylcob(III)alamin 5'-phosphate + GMP + H(+). The protein operates within cofactor biosynthesis; adenosylcobalamin biosynthesis; adenosylcobalamin from cob(II)yrinate a,c-diamide: step 7/7. Functionally, joins adenosylcobinamide-GDP and alpha-ribazole to generate adenosylcobalamin (Ado-cobalamin). Also synthesizes adenosylcobalamin 5'-phosphate from adenosylcobinamide-GDP and alpha-ribazole 5'-phosphate. The protein is Adenosylcobinamide-GDP ribazoletransferase of Listeria monocytogenes serotype 4b (strain F2365).